Consider the following 250-residue polypeptide: DNA repair protein RecO (250 aa).

This sequence belongs to the RecO family.

Involved in DNA repair and RecF pathway recombination. The sequence is that of DNA repair protein RecO from Rhodopseudomonas palustris (strain TIE-1).